A 793-amino-acid polypeptide reads, in one-letter code: Calcium permeable stress-gated cation channel 1 (793 aa).

At 1-21 the chain is on the lumenal side; the sequence is MAFNGYGIFDSDPRKNPSSDL. The helical transmembrane segment at 22-42 threads the bilayer; the sequence is RTQFWLAFLLGASACVFFCFF. Topologically, residues 43-95 are cytoplasmic; sequence RKRWKVLYAPRTTIEGLNLPTLSSSYYKWLMDLVNIPDDVVQNCAGLDGYVFL. The helical transmembrane segment at 96 to 116 threads the bilayer; it reads LFFKMGIKFLSFASLLGVLII. Topologically, residues 117 to 192 are lumenal; the sequence is MPVNKHFRGD…IPGLPQPGDG (76 aa). The helical transmembrane segment at 193 to 213 threads the bilayer; sequence FLYLYVLFTYFISIFLLYVLF. At 214 to 444 the chain is on the cytoplasmic side; the sequence is SSTKSIADIR…HKFFQGWFIT (231 aa). A helical transmembrane segment spans residues 445-465; it reads LVTFMIILLWTVPVGAIAVFI. The Lumenal segment spans residues 466–493; it reads NLDTIRRLWPELGRMIEDLPFLNSLLRT. Residues 494-514 traverse the membrane as a helical segment; the sequence is FLPTLVYSLFISISPFLFRWL. Over 515–534 the chain is Cytoplasmic; the sequence is SSMQGLSSRAEEEIYAVGKN. Residues 535–555 traverse the membrane as a helical segment; it reads YAYLFVNFFLVYVIAGSTSIW. The Lumenal portion of the chain corresponds to 556–577; the sequence is ELAKDTTSFAHFLANRLPHQAQ. A helical transmembrane segment spans residues 578 to 598; sequence FFIDLIVLQGIGMFPLKLIQL. The Cytoplasmic segment spans residues 599 to 646; the sequence is GKLSSYFVRRSFVPYSIASKKFETPDSFSVGIFLPQPMFIMLICLCYS. Residues 647–667 form a helical membrane-spanning segment; that stretch reads IISPLILVFGLIYFIIGFLVY. Residues 668 to 687 are Lumenal-facing; sequence KYELIYQMEHPQHSTGELWS. Residues 688 to 708 traverse the membrane as a helical segment; sequence TIFLRMIFGCVIMQLTMMGLM. Residues 709-713 are Cytoplasmic-facing; it reads SLRKA. A helical transmembrane segment spans residues 714–734; that stretch reads YWLSTVIFPLLCFTVISAYNF. Residues 735 to 793 lie on the Lumenal side of the membrane; the sequence is STMIRSSMQFVSLYYIRTHQSNTLSSESESRNSESSGSYVHPGFDLSNEELPLIDLNTA. Positions 759 to 778 are disordered; sequence SSESESRNSESSGSYVHPGF.

Belongs to the CSC1 (TC 1.A.17) family.

Its subcellular location is the vacuole membrane. Acts as an osmosensitive calcium-permeable cation channel. This chain is Calcium permeable stress-gated cation channel 1, found in Schizosaccharomyces pombe (strain 972 / ATCC 24843) (Fission yeast).